The primary structure comprises 781 residues: Phenylalanine--tRNA ligase beta subunit (781 aa).

Positions A39–R147 constitute a tRNA-binding domain. A B5 domain is found at P398 to A473. Mg(2+) contacts are provided by D451, D457, E460, and E461. Residues S687 to R780 enclose the FDX-ACB domain.

It belongs to the phenylalanyl-tRNA synthetase beta subunit family. Type 1 subfamily. Tetramer of two alpha and two beta subunits. Mg(2+) serves as cofactor.

The protein localises to the cytoplasm. The enzyme catalyses tRNA(Phe) + L-phenylalanine + ATP = L-phenylalanyl-tRNA(Phe) + AMP + diphosphate + H(+). This is Phenylalanine--tRNA ligase beta subunit from Thiobacillus denitrificans (strain ATCC 25259 / T1).